A 248-amino-acid polypeptide reads, in one-letter code: MTNGKLILLRHGQSEWNASNQFTGWVDVNLTEQGEAEAKRGGELLVEAGVLPGVVYTSLLRRAIRTANIALNAADRHWIPVIRDWRLNERHYGALQGLDKAATKEKYGDDQFMEWRRSYDTPPPELADDAEYSQANDPRYADLDVVPRTECLKDVVVRFVPYFEEEILPRAKKGETVLIAAHGNSLRALVKHLDGISDADIAELNIPTGIPLVYEIAEDGSVVNPGGTYLDPEAAAAGAAAVANQGNK.

Residues 10-17 (RHGQSEWN), 23-24 (TG), arginine 62, 89-92 (ERHY), lysine 100, 116-117 (RR), and 183-184 (GN) each bind substrate. The active-site Tele-phosphohistidine intermediate is the histidine 11. The active-site Proton donor/acceptor is the glutamate 89.

This sequence belongs to the phosphoglycerate mutase family. BPG-dependent PGAM subfamily.

It catalyses the reaction (2R)-2-phosphoglycerate = (2R)-3-phosphoglycerate. It functions in the pathway carbohydrate degradation; glycolysis; pyruvate from D-glyceraldehyde 3-phosphate: step 3/5. Catalyzes the interconversion of 2-phosphoglycerate and 3-phosphoglycerate. The chain is 2,3-bisphosphoglycerate-dependent phosphoglycerate mutase from Corynebacterium glutamicum (strain ATCC 13032 / DSM 20300 / JCM 1318 / BCRC 11384 / CCUG 27702 / LMG 3730 / NBRC 12168 / NCIMB 10025 / NRRL B-2784 / 534).